Here is a 97-residue protein sequence, read N- to C-terminus: UPF0125 protein plu3376 (97 aa).

This sequence belongs to the UPF0125 (RnfH) family.

The protein is UPF0125 protein plu3376 of Photorhabdus laumondii subsp. laumondii (strain DSM 15139 / CIP 105565 / TT01) (Photorhabdus luminescens subsp. laumondii).